The chain runs to 639 residues: Serine/threonine-protein phosphatase 2B catalytic subunit A1 (639 aa).

D120, H122, and D148 together coordinate Fe cation. 2 residues coordinate Zn(2+): D148 and N180. H181 serves as the catalytic Proton donor. The Zn(2+) site is built by H229 and H311. A compositionally biased stretch (basic and acidic residues) spans 494–503 (KSDIENERLP). Residues 494 to 602 (KSDIENERLP…PSTRRRSLEN (109 aa)) are disordered. Low complexity-rich tracts occupy residues 515–527 (ASPSASPIMPATP) and 546–572 (TPISSAIASGSPGSPGTPTSPSIGGPP).

This sequence belongs to the PPP phosphatase family. PP-2B subfamily. In terms of assembly, composed of two components (A and B), the A component is the catalytic subunit and the B component confers calcium sensitivity. Fe(3+) is required as a cofactor. Requires Zn(2+) as cofactor.

The enzyme catalyses O-phospho-L-seryl-[protein] + H2O = L-seryl-[protein] + phosphate. The catalysed reaction is O-phospho-L-threonyl-[protein] + H2O = L-threonyl-[protein] + phosphate. Its function is as follows. Calcium-dependent, calmodulin-stimulated protein phosphatase. This subunit may have a role in the calmodulin activation of calcineurin. The sequence is that of Serine/threonine-protein phosphatase 2B catalytic subunit A1 (CNA1) from Cryptococcus neoformans var. grubii serotype A (strain H99 / ATCC 208821 / CBS 10515 / FGSC 9487) (Filobasidiella neoformans var. grubii).